Reading from the N-terminus, the 285-residue chain is MTAHIISGTAVAKQVKANIAEQIQAYTAQDKRKPGLAVILVGMDPASQVYVNSKRKSCAEIGIESKSYDLPAETGEAELLAIIEQLNHDDSVDGILVQLPLPKQIDATKVTEAIVPHKDVDGFHPYNVGRLCQKIPTLRSCTPYGVMKLLESTGVNLAGLHAVVVGASNIVGRPMAMELLLAGCTVTVTHSRTKDLAYHVSQADIVVAGVGKPNFVKGEWIKPGAIVIDVGINRVEGKLIGDVEYSAAEAKASFITPVPGGVGPMTVAMLMQNTLQAYQVHLQAV.

NADP(+)-binding positions include 166 to 168 (GAS), Ser191, and Ile232.

Belongs to the tetrahydrofolate dehydrogenase/cyclohydrolase family. As to quaternary structure, homodimer.

It catalyses the reaction (6R)-5,10-methylene-5,6,7,8-tetrahydrofolate + NADP(+) = (6R)-5,10-methenyltetrahydrofolate + NADPH. The enzyme catalyses (6R)-5,10-methenyltetrahydrofolate + H2O = (6R)-10-formyltetrahydrofolate + H(+). Its pathway is one-carbon metabolism; tetrahydrofolate interconversion. Its function is as follows. Catalyzes the oxidation of 5,10-methylenetetrahydrofolate to 5,10-methenyltetrahydrofolate and then the hydrolysis of 5,10-methenyltetrahydrofolate to 10-formyltetrahydrofolate. The polypeptide is Bifunctional protein FolD (Actinobacillus pleuropneumoniae serotype 7 (strain AP76)).